The following is a 246-amino-acid chain: Probable transcriptional regulatory protein NT01CX_1819 (246 aa).

The protein belongs to the TACO1 family.

The protein resides in the cytoplasm. The chain is Probable transcriptional regulatory protein NT01CX_1819 from Clostridium novyi (strain NT).